The following is a 301-amino-acid chain: Probable alpha-L-glutamate ligase 1 (301 aa).

The ATP-grasp domain occupies 104-287 (LQLLSRKGIG…VTEPIVEYIE (184 aa)). ATP is bound by residues Lys141, 178–179 (EY), Asp187, and 211–213 (RSN). Asp248, Glu260, and Asn262 together coordinate Mg(2+). Mn(2+) is bound by residues Asp248, Glu260, and Asn262.

The protein belongs to the RimK family. The cofactor is Mg(2+). Requires Mn(2+) as cofactor.

The chain is Probable alpha-L-glutamate ligase 1 from Shewanella sp. (strain ANA-3).